The primary structure comprises 97 residues: Large ribosomal subunit protein eL21 (97 aa).

It belongs to the eukaryotic ribosomal protein eL21 family.

The sequence is that of Large ribosomal subunit protein eL21 from Methanosarcina barkeri (strain Fusaro / DSM 804).